The primary structure comprises 158 residues: Ribosome maturation factor RimP (158 aa).

It belongs to the RimP family.

Its subcellular location is the cytoplasm. Required for maturation of 30S ribosomal subunits. In Lactobacillus helveticus (strain DPC 4571), this protein is Ribosome maturation factor RimP.